A 239-amino-acid chain; its full sequence is Tetratricopeptide repeat protein 9B (239 aa).

Residues 1–54 (MQRGALSPVLMLSAAPEPPPRPPPALSPPGPGSAPRHGSARSGPAPEPSGGLAA) are disordered. A phosphoserine mark is found at Ser7 and Ser27. Residues 16–32 (PEPPPRPPPALSPPGPG) show a composition bias toward pro residues. The TPR 1 repeat unit spans residues 63–97 (AVAFKAEGQRCYREKKFREAIGKYHRALLQLKAAQ). The tract at residues 98–121 (GARPGGLPTPSPGPTTSPGPARLS) is disordered. A compositionally biased stretch (pro residues) spans 104 to 114 (LPTPSPGPTTS). One copy of the TPR 2 repeat lies at 169 to 202 (FKATYRAGIAFYHLGDYARALRYLQEARSREPTD).

This sequence belongs to the TTC9 family.

The sequence is that of Tetratricopeptide repeat protein 9B (Ttc9b) from Mus musculus (Mouse).